A 142-amino-acid polypeptide reads, in one-letter code: Group IIE secretory phospholipase A2 (142 aa).

Residues 1-19 (MKPPIALACLCLLVPLAGG) form the signal peptide. 5 residues coordinate Ca(2+): aspartate 41, glycine 43, tyrosine 45, glycine 47, and glycine 49. Intrachain disulfides connect cysteine 44/cysteine 135, cysteine 46/cysteine 62, cysteine 61/cysteine 115, cysteine 67/cysteine 142, cysteine 68/cysteine 108, cysteine 77/cysteine 101, and cysteine 95/cysteine 106. Residue histidine 65 is part of the active site. Aspartate 66 lines the Ca(2+) pocket. The active site involves aspartate 109. Ca(2+) contacts are provided by tyrosine 130 and asparagine 132.

It belongs to the phospholipase A2 family. The cofactor is Ca(2+). In terms of tissue distribution, highly expressed in skin and uterus, and at lower levels in various other tissues. Expressed in hair follicles, specifically localized in companion cells of the outer root sheath and cuticular cells of the inner root sheath in hair follicles during anagen. Expressed in white and brown adipose tissue.

It localises to the secreted. The protein localises to the cytoplasm. It catalyses the reaction a 1,2-diacyl-sn-glycero-3-phosphoethanolamine + H2O = a 1-acyl-sn-glycero-3-phosphoethanolamine + a fatty acid + H(+). The enzyme catalyses 1-hexadecanoyl-2-(9Z-octadecenoyl)-sn-glycero-3-phosphoethanolamine + H2O = 1-hexadecanoyl-sn-glycero-3-phosphoethanolamine + (9Z)-octadecenoate + H(+). The catalysed reaction is 1-hexadecanoyl-2-(9Z,12Z-octadecadienoyl)-sn-glycero-3-phosphoethanolamine + H2O = 1-hexadecanoyl-sn-glycero-3-phosphoethanolamine + (9Z,12Z)-octadecadienoate + H(+). It carries out the reaction 1-hexadecanoyl-2-(5Z,8Z,11Z,14Z-eicosatetraenoyl)-sn-glycero-3-phosphoethanolamine + H2O = 1-hexadecanoyl-sn-glycero-3-phosphoethanolamine + (5Z,8Z,11Z,14Z)-eicosatetraenoate + H(+). It catalyses the reaction 1,2-dihexadecanoyl-sn-glycero-3-phospho-(1'-sn-glycerol) + H2O = 1-hexadecanoyl-sn-glycero-3-phospho-(1'-sn-glycerol) + hexadecanoate + H(+). The enzyme catalyses 1-hexadecanoyl-2-(9Z-octadecenoyl)-sn-glycero-3-phosphoglycerol + H2O = 1-hexadecanoyl-sn-glycero-3-phosphoglycerol + (9Z)-octadecenoate + H(+). The catalysed reaction is a 1,2-diacyl-sn-glycero-3-phosphocholine + H2O = a 1-acyl-sn-glycero-3-phosphocholine + a fatty acid + H(+). It carries out the reaction 1,2-dihexadecanoyl-sn-glycero-3-phosphocholine + H2O = 1-hexadecanoyl-sn-glycero-3-phosphocholine + hexadecanoate + H(+). It catalyses the reaction 1-hexadecanoyl-2-(9Z-octadecenoyl)-sn-glycero-3-phosphocholine + H2O = 1-hexadecanoyl-sn-glycero-3-phosphocholine + (9Z)-octadecenoate + H(+). The enzyme catalyses 1-hexadecanoyl-2-(9Z,12Z-octadecadienoyl)-sn-glycero-3-phosphocholine + H2O = (9Z,12Z)-octadecadienoate + 1-hexadecanoyl-sn-glycero-3-phosphocholine + H(+). The catalysed reaction is 1-hexadecanoyl-2-(4Z,7Z,10Z,13Z,16Z,19Z-docosahexaenoyl)-sn-glycero-3-phosphocholine + H2O = (4Z,7Z,10Z,13Z,16Z,19Z)-docosahexaenoate + 1-hexadecanoyl-sn-glycero-3-phosphocholine + H(+). Functionally, secretory calcium-dependent phospholipase A2 that primarily targets extracellular phospholipids. Hydrolyzes the ester bond of the fatty acyl group attached at sn-2 position of phospholipids (phospholipase A2 activity), releasing various unsaturated fatty acids including oleoate, linoleoate, arachidonate, docosahexaenoate and lysophosphatidylethanolamines in preference to lysophosphatidylcholines. In response to high-fat diet, hydrolyzes minor lipoprotein phospholipids including phosphatidylserines, phosphatidylinositols and phosphatidylglycerols, altering lipoprotein composition and fat storage in adipose tissue and liver. May act in an autocrine and paracrine manner. Contributes to lipid remodeling of cellular membranes and generation of lipid mediators involved in pathogen clearance. Cleaves sn-2 fatty acyl chains of phosphatidylglycerols and phosphatidylethanolamines, which are major components of membrane phospholipids in bacteria. Acts as a hair follicle phospholipase A2. Selectively releases lysophosphatidylethanolamines (LPE) and various unsaturated fatty acids in skin to regulate hair follicle homeostasis. May regulate the inflammatory response by releasing arachidonate, a precursor of prostaglandins and leukotrienes. Upon allergen exposure, may participate in allergic inflammatory response by enhancing leukotriene C4 synthesis and degranulation in mast cells. This chain is Group IIE secretory phospholipase A2 (Pla2g2e), found in Mus musculus (Mouse).